A 235-amino-acid chain; its full sequence is Small ribosomal subunit protein uS2c (235 aa).

Belongs to the universal ribosomal protein uS2 family.

Its subcellular location is the plastid. It localises to the chloroplast. The sequence is that of Small ribosomal subunit protein uS2c (rps2) from Guillardia theta (Cryptophyte).